Reading from the N-terminus, the 470-residue chain is Uronate isomerase (470 aa).

The protein belongs to the metallo-dependent hydrolases superfamily. Uronate isomerase family.

The enzyme catalyses D-glucuronate = D-fructuronate. The catalysed reaction is aldehydo-D-galacturonate = keto-D-tagaturonate. The protein operates within carbohydrate metabolism; pentose and glucuronate interconversion. The sequence is that of Uronate isomerase from Escherichia coli O8 (strain IAI1).